A 419-amino-acid chain; its full sequence is uncharacterized protein (419 aa).

Residues C38, C44, C47, and C126 each contribute to the [4Fe-4S] cluster site. The S-adenosyl-L-methionine site is built by Q250, Y280, E301, and D346. C373 serves as the catalytic Nucleophile.

This sequence belongs to the class I-like SAM-binding methyltransferase superfamily. RNA M5U methyltransferase family.

This is an uncharacterized protein from Prochlorococcus marinus (strain SARG / CCMP1375 / SS120).